A 506-amino-acid polypeptide reads, in one-letter code: Tabersonine 6,7-epoxidase isoform 1 (506 aa).

A helical transmembrane segment spans residues 1–21; the sequence is MEFVVSLFAFVVSCFILLKVA. N-linked (GlcNAc...) asparagine glycans are attached at residues N173 and N261. C441 lines the heme pocket.

The protein belongs to the cytochrome P450 family. The cofactor is heme. As to expression, mainly expressed in roots.

It is found in the endoplasmic reticulum membrane. The catalysed reaction is (-)-tabersonine + reduced [NADPH--hemoprotein reductase] + O2 = lochnericine + oxidized [NADPH--hemoprotein reductase] + H2O + H(+). Its pathway is alkaloid biosynthesis. Component of the monoterpenoid indole alkaloids (MIAs, e.g. echitovenine, tabersonine, lochnericine, 19-hydroxytabersonine and horhammericine) biosynthetic pathway; MIAs are used in cancer treatment and other medical applications. Cytochrome P450 catalyzing the conversion of tabersonine to lochnericine. The protein is Tabersonine 6,7-epoxidase isoform 1 of Catharanthus roseus (Madagascar periwinkle).